The sequence spans 484 residues: MLTLLLIIPLVGALMLAPMQGNTRQSESQMKRLALGTSLINFVLSIVLWGEFDSSTSEYQFTQEFNQVNFCHLHIGVDGISLYFVLLTTFITPICILSNWDNIKEQLKYFLMCFLVLETLLIAVFVVLDILLFYVFFESVLIPLFLIVGIWGGSATRVRAAFLLFLYTLFGSLFMLLAFLVIYYNVGSTDFQVVSLSEINLESQKLLWLAVFISMAIKTPLLPFHVWLPRAHAEAPLAGSVILAGLILKLATYGYMRILIQFLPDATSYFSPLVQTIAVITLIYASLATLRQTDFKALVAYSSIGHMAVVVLGLFSNTIQGIDGALLLSIAHGVVSPALFILVGGVLYDRYHTRTIRYYRGMTAYMPLFSIMFFVFTIFNAAVPLSANWAGEFLCLAGAFQRNPVFAVLGSTGIVLSAAYSIWLYNRIAFGAWSKYLNYTTDLTRREFMLLLPLLFVAVVFGIFPNIILDSIHASTSGLIYSAS.

14 helical membrane passes run 1–21, 33–53, 77–97, 109–129, 130–150, 162–182, 206–226, 236–256, 270–290, 295–315, 326–346, 365–385, 405–425, and 448–468; these read MLTLLLIIPLVGALMLAPMQG, LALGTSLINFVLSIVLWGEFD, VDGISLYFVLLTTFITPICIL, YFLMCFLVLETLLIAVFVVLD, ILLFYVFFESVLIPLFLIVGI, FLLFLYTLFGSLFMLLAFLVI, LLWLAVFISMAIKTPLLPFHV, PLAGSVILAGLILKLATYGYM, FSPLVQTIAVITLIYASLATL, FKALVAYSSIGHMAVVVLGLF, LLLSIAHGVVSPALFILVGGV, YMPLFSIMFFVFTIFNAAVPL, VFAVLGSTGIVLSAAYSIWLY, and FMLLLPLLFVAVVFGIFPNII.

Belongs to the complex I subunit 4 family.

The protein resides in the mitochondrion inner membrane. It carries out the reaction a ubiquinone + NADH + 5 H(+)(in) = a ubiquinol + NAD(+) + 4 H(+)(out). Its function is as follows. Core subunit of the mitochondrial membrane respiratory chain NADH dehydrogenase (Complex I) that is believed to belong to the minimal assembly required for catalysis. Complex I functions in the transfer of electrons from NADH to the respiratory chain. The immediate electron acceptor for the enzyme is believed to be ubiquinone. The chain is NADH-ubiquinone oxidoreductase chain 4 (ND4) from Mycosarcoma maydis (Corn smut fungus).